A 277-amino-acid chain; its full sequence is Trypsin-2 (277 aa).

The N-terminal stretch at 1–19 is a signal peptide; the sequence is MSNKIAILLLAVVVAVVAC. The propeptide at 20 to 50 is activation peptide; the sequence is AQAQPSRRHHLVHPLLPRFLPRLHRDSNGHR. The Peptidase S1 domain occupies 51 to 276; sequence VVGGFQIDVS…VRDWVRENSG (226 aa). Cys76 and Cys92 are disulfide-bonded. Residues His91 and Asp136 each act as charge relay system in the active site. 2 disulfide bridges follow: Cys201–Cys217 and Cys228–Cys252. Ser232 acts as the Charge relay system in catalysis.

Belongs to the peptidase S1 family. Midgut.

Its subcellular location is the secreted. It catalyses the reaction Preferential cleavage: Arg-|-Xaa, Lys-|-Xaa.. Functionally, major function may be to aid in digestion of the blood meal. In Anopheles gambiae (African malaria mosquito), this protein is Trypsin-2 (TRYP2).